We begin with the raw amino-acid sequence, 242 residues long: MGTNYRRVLLKLSGEALMGNMGYGIDPEVVKEIAQEIAEVIATGVQIAIVVGGGNIFRGVKAASAGMDRATADYIGMIATVMNAMTLQDSLERIGVQTRVQTAIAMQELAEPYIRRRAIRHLEKGRVVIFGAGSGNPFFTTDTTAALRAAEIDAEVIFKATKVDGVYDADPEVYPNAKRYNSLTYAHVLAQDLRVMDSTAIALCKENNIPILVFDLTTRGNIRRAVLGESIGTLVGGSCEIS.

Residue 11–14 participates in ATP binding; sequence KLSG. The interval 19–24 is involved in allosteric activation by GTP; the sequence is GNMGYG. Gly53 contributes to the UMP binding site. Residues Gly54 and Arg58 each coordinate ATP. UMP-binding positions include Asp73 and 134–141; that span reads SGNPFFTT. ATP contacts are provided by Thr161, Tyr167, and Asp170.

Belongs to the UMP kinase family. Homohexamer.

It localises to the cytoplasm. It catalyses the reaction UMP + ATP = UDP + ADP. It participates in pyrimidine metabolism; CTP biosynthesis via de novo pathway; UDP from UMP (UMPK route): step 1/1. Its activity is regulated as follows. Allosterically activated by GTP. Inhibited by UTP. In terms of biological role, catalyzes the reversible phosphorylation of UMP to UDP. The protein is Uridylate kinase of Trichormus variabilis (strain ATCC 29413 / PCC 7937) (Anabaena variabilis).